We begin with the raw amino-acid sequence, 196 residues long: Urease accessory protein UreE (196 aa).

The interval 150-196 (RGAYSGGHDHGHAHAHSHAEAHSHAHGESHSHSHSHSHDDHHHHDHD) is disordered. The span at 156–196 (GHDHGHAHAHSHAEAHSHAHGESHSHSHSHSHDDHHHHDHD) shows a compositional bias: basic and acidic residues.

It belongs to the UreE family.

It localises to the cytoplasm. Functionally, involved in urease metallocenter assembly. Binds nickel. Probably functions as a nickel donor during metallocenter assembly. The chain is Urease accessory protein UreE from Mesorhizobium japonicum (strain LMG 29417 / CECT 9101 / MAFF 303099) (Mesorhizobium loti (strain MAFF 303099)).